We begin with the raw amino-acid sequence, 307 residues long: tRNA pseudouridine synthase B (307 aa).

The active-site Nucleophile is D48.

This sequence belongs to the pseudouridine synthase TruB family. Type 1 subfamily.

The enzyme catalyses uridine(55) in tRNA = pseudouridine(55) in tRNA. Responsible for synthesis of pseudouridine from uracil-55 in the psi GC loop of transfer RNAs. This Neisseria meningitidis serogroup B (strain ATCC BAA-335 / MC58) protein is tRNA pseudouridine synthase B.